The following is a 215-amino-acid chain: Thymidylate kinase (215 aa).

12 to 19 (GLEGAGKT) provides a ligand contact to ATP.

The protein belongs to the thymidylate kinase family.

The enzyme catalyses dTMP + ATP = dTDP + ADP. Its function is as follows. Phosphorylation of dTMP to form dTDP in both de novo and salvage pathways of dTTP synthesis. The polypeptide is Thymidylate kinase (Halorhodospira halophila (strain DSM 244 / SL1) (Ectothiorhodospira halophila (strain DSM 244 / SL1))).